Here is a 303-residue protein sequence, read N- to C-terminus: Glutathione transport system permease protein GsiD (303 aa).

The next 6 membrane-spanning stretches (helical) occupy residues 40-60, 105-125, 144-164, 165-185, 222-242, and 266-286; these read AMTA…ARWI, LAAG…LGLL, LFAF…GSGI, ANVI…LVRG, IVVF…SLSF, and VIAP…VLAF. The 190-residue stretch at 101–290 folds into the ABC transmembrane type-1 domain; that stretch reads AQISLAAGVF…LTVLAFNLLG (190 aa).

It belongs to the binding-protein-dependent transport system permease family. In terms of assembly, the complex is composed of two ATP-binding proteins (GsiA), two transmembrane proteins (GsiC and GsiD) and a solute-binding protein (GsiB).

It is found in the cell inner membrane. In terms of biological role, part of the ABC transporter complex GsiABCD involved in glutathione import. Probably responsible for the translocation of the substrate across the membrane. This is Glutathione transport system permease protein GsiD from Escherichia coli O6:K15:H31 (strain 536 / UPEC).